A 3063-amino-acid chain; its full sequence is Genome polyprotein (3063 aa).

In terms of domain architecture, Peptidase S30 spans 141–284 (KLTEGQMNHL…QSILNSMIQF (144 aa)). Residues His192, Asp201, and Ser235 each act as for P1 proteinase activity in the active site. An Involved in interaction with stylet and aphid transmission motif is present at residues 334–337 (KITC). An Involved in virions binding and aphid transmission motif is present at residues 592–594 (PTK). A Peptidase C6 domain is found at 618 to 740 (LYIAKQGYCY…ESDIKHYRVG (123 aa)). Active-site for helper component proteinase activity residues include Cys626 and His699. Positions 1229–1381 (DIAHSEHLDF…TQQPVKLIVE (153 aa)) constitute a Helicase ATP-binding domain. 1242 to 1249 (GAVGSGKS) contributes to the ATP binding site. The short motif at 1331-1334 (DECH) is the DECH box element. The region spanning 1400–1559 (DVVQFGSNVL…NLPVMTGGVS (160 aa)) is the Helicase C-terminal domain. The short motif at 1884-1892 (RKKGKGKGT) is the Nuclear localization signal element. Tyr1907 bears the O-(5'-phospho-RNA)-tyrosine mark. An interaction with host EIF4E region spans residues 1949 to 1964 (KMVENDDIEMQALGSN). A Peptidase C4 domain is found at 2032-2250 (AKSLMRGLRD…VLWGPLKLKD (219 aa)). Catalysis depends on for nuclear inclusion protein A activity residues His2077, Asp2112, and Cys2182. Residues 2519–2643 (WVYCDADGSQ…AVNPEKESIL (125 aa)) form the RdRp catalytic domain. The segment at 2798-2841 (NDTIDAGGSNKKDAKPEQGSIQPNPNKGKDKDVNAGTSGTHTVP) is disordered. Position 3046 is a phosphothreonine (Thr3046).

This sequence belongs to the potyviridae genome polyprotein family. In terms of assembly, interacts with host eIF4E protein (via cap-binding region); this interaction mediates the translation of the VPg-viral RNA conjugates. Part of a complex that comprises VPg, RNA, host EIF4E and EIF4G; this interaction mediates the translation of the VPg-viral RNA conjugates. Interaction is possible in susceptible hosts but impaired in resistant plants: the VPg of strain LYE84 interacts with tomato eIF4E1 and eIF4E2 as well as with the Capsicum annuum eIF4E1 susceptible allele pvr2(+) but not with resistant alleles pvr2(1), pvr2(2), pvr2(3), pvr2(4), pvr2(5), pvr2(6), pvr2(7), pvr2(8) and pvr2(9), the VPg of strain SON41 interacts with C.annuum eIF4E1 susceptible alleles pvr2(+), pvr2(1), pvr2(2), pvr2(3) and pvr2(4) but not with resistant alleles pvr2(5), pvr2(6), pvr2(7), pvr2(8) and pvr2(9), the VPg of strain LYE90 interacts only with tomato eIF4E1. VPg is uridylylated by the polymerase and is covalently attached to the 5'-end of the genomic RNA. This uridylylated form acts as a nucleotide-peptide primer for the polymerase. Post-translationally, potyviral RNA is expressed as two polyproteins which undergo post-translational proteolytic processing. Genome polyprotein is processed by NIa-pro, P1 and HC-pro proteinases resulting in the production of at least ten individual proteins. P3N-PIPO polyprotein is cleaved by P1 and HC-pro proteinases resulting in the production of three individual proteins. The P1 proteinase and the HC-pro cleave only their respective C-termini autocatalytically. 6K1 is essential for proper proteolytic separation of P3 from CI.

Its subcellular location is the host cytoplasmic vesicle. The protein resides in the host nucleus. It is found in the virion. It carries out the reaction RNA(n) + a ribonucleoside 5'-triphosphate = RNA(n+1) + diphosphate. It catalyses the reaction Hydrolyzes glutaminyl bonds, and activity is further restricted by preferences for the amino acids in P6 - P1' that vary with the species of potyvirus, e.g. Glu-Xaa-Xaa-Tyr-Xaa-Gln-|-(Ser or Gly) for the enzyme from tobacco etch virus. The natural substrate is the viral polyprotein, but other proteins and oligopeptides containing the appropriate consensus sequence are also cleaved.. The enzyme catalyses Hydrolyzes a Gly-|-Gly bond at its own C-terminus, commonly in the sequence -Tyr-Xaa-Val-Gly-|-Gly, in the processing of the potyviral polyprotein.. Functionally, required for aphid transmission and also has proteolytic activity. Only cleaves a Gly-Gly dipeptide at its own C-terminus. Interacts with virions and aphid stylets. Acts as a suppressor of RNA-mediated gene silencing, also known as post-transcriptional gene silencing (PTGS), a mechanism of plant viral defense that limits the accumulation of viral RNAs. May have RNA-binding activity. In terms of biological role, has helicase activity. It may be involved in replication. Its function is as follows. Indispensable for virus replication. Reduces the abundance of host transcripts related to jasmonic acid biosynthesis therefore altering the host defenses. In order to increase its own stability, decreases host protein degradation pathways. Indispensable for virus replication. Functionally, mediates the cap-independent, EIF4E-dependent translation of viral genomic RNAs. Binds to the cap-binding site of host EIF4E and thus interferes with the host EIF4E-dependent mRNA export and translation. VPg-RNA directly binds EIF4E and is a template for transcription. Also forms trimeric complexes with EIF4E-EIF4G, which are templates for translation. In terms of biological role, has RNA-binding and proteolytic activities. Its function is as follows. An RNA-dependent RNA polymerase that plays an essential role in the virus replication. Involved in aphid transmission, cell-to-cell and systemis movement, encapsidation of the viral RNA and in the regulation of viral RNA amplification. This is Genome polyprotein from Potato virus Y (strain N) (PVY).